The following is a 120-amino-acid chain: Small ribosomal subunit protein eS25 (120 aa).

The tract at residues 1-32 (MPPKAGQTKKAKMEAANKGAKKTTKKWSKGQS) is disordered. Positions 19–28 (GAKKTTKKWS) are enriched in basic residues.

Belongs to the eukaryotic ribosomal protein eS25 family.

The sequence is that of Small ribosomal subunit protein eS25 (RPS25) from Leishmania infantum.